We begin with the raw amino-acid sequence, 928 residues long: Protein Niban 1 (928 aa).

Gly-2 carries N-myristoyl glycine lipidation. Phosphoserine occurs at positions 579, 582, 596, 602, and 646. Over residues 580 to 596 (VSSLTDLKPPTGSNQAS) the composition is skewed to polar residues. The tract at residues 580–600 (VSSLTDLKPPTGSNQASPARR) is disordered. 2 disordered regions span residues 618–654 (VFQE…GTEQ) and 669–707 (ATED…TASG). A compositionally biased stretch (acidic residues) spans 690–701 (LEDEEPAQEEPE). Ser-708 is modified (phosphoserine). 2 disordered regions span residues 723–877 (PVDS…ATAS) and 899–928 (PNPD…PSEE). Residues 801–818 (GGLTEEPLGPMEGELPGE) show a composition bias toward low complexity. Positions 825 to 834 (HEGRGGKCTE) are enriched in basic and acidic residues. Residues 865–877 (MGGQSSAAQATAS) show a composition bias toward low complexity. Residues 905–915 (LSHKDDVKEGE) show a composition bias toward basic and acidic residues. Residue Ser-926 is modified to Phosphoserine.

Belongs to the Niban family. As to expression, expressed in various types of thyroid tumor such as papillary thyroid carcinomas and oxyphilic thyroid tumors but not in normal thyroid tissue (at protein level). Strongly expressed in heart, skeletal muscle, pancreas, white blood cells and prostate with moderate expression in colon and spleen. Expressed in renal carcinoma cells but not in normal kidney.

The protein resides in the cytoplasm. It localises to the membrane. In terms of biological role, regulates phosphorylation of a number of proteins involved in translation regulation including EIF2A, EIF4EBP1 and RPS6KB1. May be involved in the endoplasmic reticulum stress response. The sequence is that of Protein Niban 1 from Homo sapiens (Human).